Here is an 846-residue protein sequence, read N- to C-terminus: Translation initiation factor IF-2 (846 aa).

A disordered region spans residues 198–219; that stretch reads YKREEEEKKSKAKKAGGKGFKK. Residues 207–219 show a composition bias toward basic residues; that stretch reads SKAKKAGGKGFKK. Residues 345–512 form the tr-type G domain; it reads SRAPVVTIMG…AVLLQSEVLE (168 aa). The interval 354 to 361 is G1; sequence GHVDHGKT. A GTP-binding site is contributed by 354-361; the sequence is GHVDHGKT. Residues 379 to 383 form a G2 region; the sequence is GITQH. A G3 region spans residues 400–403; it reads DTPG. GTP is bound by residues 400–404 and 454–457; these read DTPGH and NKID. A G4 region spans residues 454-457; it reads NKID. Residues 490-492 form a G5 region; sequence SAK.

The protein belongs to the TRAFAC class translation factor GTPase superfamily. Classic translation factor GTPase family. IF-2 subfamily.

The protein localises to the cytoplasm. Functionally, one of the essential components for the initiation of protein synthesis. Protects formylmethionyl-tRNA from spontaneous hydrolysis and promotes its binding to the 30S ribosomal subunits. Also involved in the hydrolysis of GTP during the formation of the 70S ribosomal complex. This Francisella tularensis subsp. novicida (strain U112) protein is Translation initiation factor IF-2.